Consider the following 581-residue polypeptide: Putative protein phosphatase 2C 22 (581 aa).

Positions 1–21 are cleaved as a signal peptide; it reads MVISVPLFSSVLLALVVAVPA. Positions 102–478 constitute a PPM-type phosphatase domain; sequence KYASSAMQGL…NNATAILVQF (377 aa). Positions 138, 139, 373, and 469 each coordinate Mn(2+). The disordered stretch occupies residues 538 to 563; that stretch reads SDEVAGGAAVAEQHQHNPEGGGEQQL.

The protein belongs to the PP2C family. It depends on Mg(2+) as a cofactor. Requires Mn(2+) as cofactor.

It carries out the reaction O-phospho-L-seryl-[protein] + H2O = L-seryl-[protein] + phosphate. It catalyses the reaction O-phospho-L-threonyl-[protein] + H2O = L-threonyl-[protein] + phosphate. The polypeptide is Putative protein phosphatase 2C 22 (Oryza sativa subsp. japonica (Rice)).